Reading from the N-terminus, the 267-residue chain is Thiamine thiazole synthase (267 aa).

NAD(+)-binding positions include Ser41, 60 to 61, Gly68, Val132, and 160 to 162; these read ER and HVD. Asp162 and His177 together coordinate Fe cation. Met227 contributes to the NAD(+) binding site. Arg237 contributes to the glycine binding site.

This sequence belongs to the THI4 family. In terms of assembly, homooctamer; tetramer of dimers. The cofactor is Fe(2+).

The catalysed reaction is hydrogen sulfide + glycine + NAD(+) = ADP-5-ethyl-4-methylthiazole-2-carboxylate + nicotinamide + 3 H2O + H(+). The protein operates within cofactor biosynthesis; thiamine diphosphate biosynthesis. In terms of biological role, involved in the biosynthesis of the thiazole moiety of thiamine. Catalyzes the conversion of NAD and glycine to adenosine diphosphate 5-(2-hydroxyethyl)-4-methylthiazole-2-carboxylate (ADT), an adenylated thiazole intermediate, using free sulfide as a source of sulfur. This is Thiamine thiazole synthase from Saccharolobus solfataricus (strain ATCC 35092 / DSM 1617 / JCM 11322 / P2) (Sulfolobus solfataricus).